The following is a 692-amino-acid chain: MSRTLFVTTALPYANGSFHIGHIMEYIQADIWVRSMRMAGHTVHFVGADDAHGAPIMLKAEKEGITPQALVARYAAERPRYLDGFHIRFDHWHSTDTPENVALSQEIYRALKSEGLIETRSIEQFYDPVKGMFLADRYIKGECPRCHAKDQYGDSCEVCGAVYAPTELINPYSALTGAAPVLKSSDHFFFKLSDPRCVEFLQQWTTGANRQGVKHLQAEVQAKTREWLGGDDGEAKLGDWDISRDAPYFGIEIPDAPGKYFYVWLDAPVGYLASLKSYCAAKGLDFDALLDPAGPTEQVHFIGKDIIYFHALFWPAMLKFAGRKTPDQLNVHGFITVSGEKMSKSRGTGISPLRYLEIGMDAEWLRYYMAAKLNARVEDMDFNPEDFVARVNSDLVGKYVNIASRAAAFITRHFDGELAYDGDTDALAAEFAQQAESIRAAFEAREYNRAVREIMAHADRINQAFDAAQPWVMAKGIGAADAATRARLQDICSRALAGFKALSVMLAPVLPALASRVARELFGANADFAWGDAQQLPQRVAPFKHLMQRVDPKLLDDLFEPPAAEASAPAALPGGEALADTITIDDFAKIDLRIARIVNCEEVEGSTKLLRLTLDVGEGRHRNVFSGIKSAYQPQDLVGKLTVLVANLAPRKMKFGVSEGMVLAASHADEKAEPGIYVLEPWPGAQPGMRVR.

The short motif at 12–22 (PYANGSFHIGH) is the 'HIGH' region element. Zn(2+) is bound by residues Cys143, Cys146, Cys156, and Cys159. The 'KMSKS' region signature appears at 341-345 (KMSKS). Lys344 lines the ATP pocket. Residues 586-692 (DFAKIDLRIA…PGAQPGMRVR (107 aa)) enclose the tRNA-binding domain.

Belongs to the class-I aminoacyl-tRNA synthetase family. MetG type 1 subfamily. In terms of assembly, homodimer. The cofactor is Zn(2+).

The protein localises to the cytoplasm. It carries out the reaction tRNA(Met) + L-methionine + ATP = L-methionyl-tRNA(Met) + AMP + diphosphate. Its function is as follows. Is required not only for elongation of protein synthesis but also for the initiation of all mRNA translation through initiator tRNA(fMet) aminoacylation. This is Methionine--tRNA ligase from Bordetella parapertussis (strain 12822 / ATCC BAA-587 / NCTC 13253).